The sequence spans 87 residues: Small ribosomal subunit protein uS15c (87 aa).

Belongs to the universal ribosomal protein uS15 family. As to quaternary structure, part of the 30S ribosomal subunit.

It localises to the plastid. The protein resides in the chloroplast. The polypeptide is Small ribosomal subunit protein uS15c (rps15) (Oenothera argillicola (Appalachian evening primrose)).